Consider the following 437-residue polypeptide: Glucose-1-phosphate adenylyltransferase (437 aa).

Alpha-D-glucose 1-phosphate-binding positions include tyrosine 113, glycine 179, 194–195 (EK), and serine 212.

This sequence belongs to the bacterial/plant glucose-1-phosphate adenylyltransferase family. Homotetramer.

It catalyses the reaction alpha-D-glucose 1-phosphate + ATP + H(+) = ADP-alpha-D-glucose + diphosphate. It participates in glycan biosynthesis; glycogen biosynthesis. Involved in the biosynthesis of ADP-glucose, a building block required for the elongation reactions to produce glycogen. Catalyzes the reaction between ATP and alpha-D-glucose 1-phosphate (G1P) to produce pyrophosphate and ADP-Glc. The polypeptide is Glucose-1-phosphate adenylyltransferase (Haemophilus influenzae (strain 86-028NP)).